Here is a 169-residue protein sequence, read N- to C-terminus: T-cell receptor gamma chain C region DFL12 (169 aa).

Residues 1-136 (PSDKRLDADI…LQFMSTSAYY (136 aa)) are c region. Residues 137–157 (TYLLLLLKSVIYLAIISFSLL) form a helical membrane-spanning segment. Over 158 to 169 (RRTSVCCNEKRS) the chain is Cytoplasmic.

The protein resides in the membrane. This is T-cell receptor gamma chain C region DFL12 from Mus musculus (Mouse).